The chain runs to 292 residues: Forkhead box protein R1 (292 aa).

2 disordered regions span residues 31 to 50 and 65 to 166; these read PPKL…PDYE and PGKL…ASSQ. Composition is skewed to basic and acidic residues over residues 35-47 and 70-79; these read PLEK…KDGP and VSGRRKREDL. A compositionally biased stretch (polar residues) spans 80 to 89; it reads TSTLPSSQPP. A compositionally biased stretch (acidic residues) spans 129-140; sequence LTEEEEAEDQED. Positions 149 to 161 are enriched in basic residues; it reads PHKRAPLQSRRLR. A DNA-binding region (fork-head) is located at residues 173-272; that stretch reads RPPLNYFHLI…EEARALASTR (100 aa).

In terms of tissue distribution, expressed in testis (at protein level).

The protein localises to the nucleus. It is found in the cytoplasm. The protein resides in the perinuclear region. Transcription factor which acts as both an activator and a repressor. Activates transcription of a number of genes including the heat shock chaperones HSPA1A and HSPA6 and the antioxidant NADPH-dependent reductase DHRS2 which are involved in protection against oxidative stress. Required for normal brain development. In Homo sapiens (Human), this protein is Forkhead box protein R1 (FOXR1).